We begin with the raw amino-acid sequence, 369 residues long: Eukaryotic translation initiation factor 3 subunit F (369 aa).

Positions 31–170 (VNIQPQAVFS…TKTYISAPVA (140 aa)) constitute an MPN domain. Over residues 309 to 334 (LDEGKEGGEKKDGEGAEGDKKTDGQR) the composition is skewed to basic and acidic residues. Residues 309-369 (LDEGKEGGEK…EPREPREAAE (61 aa)) are disordered. The segment covering 335–353 (GQRGQGGKRGGRSGGAGGR) has biased composition (gly residues). The segment covering 354–369 (GGREQREPREPREAAE) has biased composition (basic and acidic residues).

The protein belongs to the eIF-3 subunit F family. In terms of assembly, component of the eukaryotic translation initiation factor 3 (eIF-3) complex.

It is found in the cytoplasm. Functionally, component of the eukaryotic translation initiation factor 3 (eIF-3) complex, which is involved in protein synthesis of a specialized repertoire of mRNAs and, together with other initiation factors, stimulates binding of mRNA and methionyl-tRNAi to the 40S ribosome. The eIF-3 complex specifically targets and initiates translation of a subset of mRNAs involved in cell proliferation. The protein is Eukaryotic translation initiation factor 3 subunit F of Neurospora crassa (strain ATCC 24698 / 74-OR23-1A / CBS 708.71 / DSM 1257 / FGSC 987).